Here is a 143-residue protein sequence, read N- to C-terminus: 3-dehydroquinate dehydratase (143 aa).

Tyrosine 22 serves as the catalytic Proton acceptor. Positions 73, 79, and 86 each coordinate substrate. The Proton donor role is filled by histidine 99. Substrate contacts are provided by residues 100-101 and arginine 110; that span reads IS.

This sequence belongs to the type-II 3-dehydroquinase family. In terms of assembly, homododecamer.

It catalyses the reaction 3-dehydroquinate = 3-dehydroshikimate + H2O. Its pathway is metabolic intermediate biosynthesis; chorismate biosynthesis; chorismate from D-erythrose 4-phosphate and phosphoenolpyruvate: step 3/7. Its function is as follows. Catalyzes a trans-dehydration via an enolate intermediate. The protein is 3-dehydroquinate dehydratase of Mycolicibacterium paratuberculosis (strain ATCC BAA-968 / K-10) (Mycobacterium paratuberculosis).